We begin with the raw amino-acid sequence, 396 residues long: MKLPLLEEQNLKGKRVFVRVDFNVPVENGKATDRTRIEKTLPTLELLISKGAKIILGSHLGRPKGGPEPKYSMKPVFDVLSELVKTKVSFSESVIGSDVVKMTNALGEGEILLLENLRFHKEEEENVASFCKELAKLADVYVNDAFGTAHRAHASTEGVAHLLPAFAGLLMRKEIEVLSGLLAKPERPFVAIVGGSKVSSKFAILKNLLEKVDHLLIGGGMAYTFLKSRAVPVGKSLVEPEFESQAFQLIDRAGIQGVDLQIPVDHIIADAFDPNAKTKSVDKMGIIDGWMGMDIGPKTIDNYVKAIKDAKTILWNGPMGVFEMDKFSKGTIEIAKAISKSKAKTVVGGGDSIAAVNKAGVADKITHISTGGGASLEFLEGRTLPGVQCLLPKEEK.

Substrate is bound by residues 21–23 (DFN), Arg36, 59–62 (HLGR), Arg118, and Arg151. ATP contacts are provided by residues Lys201, Gly292, Glu323, and 349-352 (GGDS).

This sequence belongs to the phosphoglycerate kinase family. As to quaternary structure, monomer.

It is found in the cytoplasm. The catalysed reaction is (2R)-3-phosphoglycerate + ATP = (2R)-3-phospho-glyceroyl phosphate + ADP. It functions in the pathway carbohydrate degradation; glycolysis; pyruvate from D-glyceraldehyde 3-phosphate: step 2/5. This chain is Phosphoglycerate kinase, found in Leptospira biflexa serovar Patoc (strain Patoc 1 / Ames).